We begin with the raw amino-acid sequence, 192 residues long: Xanthine phosphoribosyltransferase (192 aa).

2 residues coordinate xanthine: leucine 20 and threonine 26. A 5-phospho-alpha-D-ribose 1-diphosphate-binding site is contributed by 127–131 (ANGQA). Residue lysine 155 coordinates xanthine.

The protein belongs to the purine/pyrimidine phosphoribosyltransferase family. Xpt subfamily. As to quaternary structure, homodimer.

The protein localises to the cytoplasm. The catalysed reaction is XMP + diphosphate = xanthine + 5-phospho-alpha-D-ribose 1-diphosphate. It participates in purine metabolism; XMP biosynthesis via salvage pathway; XMP from xanthine: step 1/1. Its function is as follows. Converts the preformed base xanthine, a product of nucleic acid breakdown, to xanthosine 5'-monophosphate (XMP), so it can be reused for RNA or DNA synthesis. This Streptococcus thermophilus protein is Xanthine phosphoribosyltransferase.